Here is a 296-residue protein sequence, read N- to C-terminus: Decaprenyl diphosphate synthase (296 aa).

A disordered region spans residues 1-58 (MVRNERTLKSTDFPQLPPAPDDYPTFPDKSTWPVVFPMLPPSPDGGPRRPPQHTSKAV). D76 is an active-site residue. D76 contacts Mg(2+). Substrate is bound by residues 77–80 (GNGR), W81, R89, H93, and 121–123 (STE). N124 serves as the catalytic Proton acceptor. Residues W125, R127, R244, and 250–252 (RSS) each bind substrate. E263 provides a ligand contact to Mg(2+).

Belongs to the UPP synthase family. In terms of assembly, homodimer. Requires Mg(2+) as cofactor.

It localises to the cell membrane. The enzyme catalyses (2Z,6E)-farnesyl diphosphate + 7 isopentenyl diphosphate = (2Z,6Z,10Z,14Z,18Z,22Z,26Z,30Z,34E)-decaprenyl diphosphate + 7 diphosphate. The catalysed reaction is n isopentenyl diphosphate + (2E,6E)-farnesyl diphosphate = a di-trans,poly-cis-polyprenyl diphosphate + n diphosphate. Catalyzes the sequential condensation of isopentenyl diphosphate (IPP) in the cis configuration with (2Z,6E)-farnesyl diphosphate (Z-FPP or EZ-FPP) generating the 50 carbon product trans,polycis-decaprenyl diphosphate. When (2E,6E)-farnesyl diphosphate (E-FPP or EE-FPP) is used in vitro, both primary products decaprenyl diphosphate and (2E,6E,10E)-geranylgeranyl diphosphate (EEE-GGPP) are synthesized. M.tuberculosis does not synthesize (2E,6E,10Z)-geranylgeranyl diphosphate (EEZ-GGPP) and heptaprenyl diphosphate. Can also accept many different allylic substrates, including E-geranyl diphosphate (E-GPP), neryl diphosphate (NPP), and all-trans-geranyl-geranyl diphosphate. This Mycobacterium leprae (strain TN) protein is Decaprenyl diphosphate synthase (uppS).